A 2019-amino-acid chain; its full sequence is Sodium channel protein type 5 subunit alpha (2019 aa).

The Cytoplasmic portion of the chain corresponds to 1–129 (MANFLLPRGT…VRRAAVKILV (129 aa)). A disordered region spans residues 27–66 (RMAEKQARGSATSQESREGLPEEEAPRPQLDLQASKKLPD). S36 carries the post-translational modification Phosphoserine. Residue T38 is modified to Phosphothreonine. Basic and acidic residues predominate over residues 41–52 (ESREGLPEEEAP). The stretch at 113–420 (VLSPFHPVRR…VVAMAYEEQN (308 aa)) is one I repeat. The chain crosses the membrane as a helical span at residues 130-149 (HSLFSMLIMCTILTNCVFMA). At 150–157 (QHDPPPWT) the chain is on the extracellular side. A helical transmembrane segment spans residues 158-179 (KYVEYTFTAIYTFESLVKILAR). The Cytoplasmic segment spans residues 180-188 (GFCLHAFTF). Residues 189-209 (LRDPWNWLDFSVIVMAYTTEF) form a helical membrane-spanning segment. Over 210–216 (VDLGNVS) the chain is Extracellular. N-linked (GlcNAc...) asparagine glycosylation occurs at N214. A helical transmembrane segment spans residues 217–236 (ALRTFRVLRALKTISVISGL). Residues 237 to 249 (KTIVGALIQSVKK) lie on the Cytoplasmic side of the membrane. Residues 250-272 (LADVMVLTVFCLSVFALIGLQLF) form a helical membrane-spanning segment. The Extracellular portion of the chain corresponds to 273 to 357 (MGNLRHKCVR…PDHGYTSFDS (85 aa)). C280 and C335 are oxidised to a cystine. N-linked (GlcNAc...) asparagine glycans are attached at residues N283, N288, N291, N318, and N328. Residues 358–378 (FAWAFLALFRLMTQDCWERLY) constitute an intramembrane region (pore-forming). Over 379–386 (QQTLRSAG) the chain is Extracellular. Residues 387–413 (KIYMIFFMLVIFLGSFYLVNLILAVVA) form a helical membrane-spanning segment. At 414–719 (MAYEEQNQAT…VKFVVMDPFA (306 aa)) the chain is on the cytoplasmic side. 4 positions are modified to phosphoserine: S457, S460, S483, and S484. Disordered regions lie at residues 461-575 (LEMS…TQGQ) and 610-647 (EATS…TPQA). Residue T486 is modified to Phosphothreonine. Over residues 491 to 503 (DDRLPKSDSEDGP) the composition is skewed to basic and acidic residues. Residues S497 and S510 each carry the phosphoserine modification. Residues 507–528 (NQLSLTHGLSRTSMRPRSSRGS) show a composition bias toward polar residues. R526 is subject to Dimethylated arginine; alternate. R526 bears the Omega-N-methylarginine; alternate mark. Phosphoserine is present on residues S539 and S571. 2 positions are modified to phosphoserine: S664 and S667. Residues 699–971 (CCPLWMSIKQ…QLALARIQRG (273 aa)) form an II repeat. A helical membrane pass occupies residues 720–737 (DLTITMCIVLNTLFMALE). Over 738–746 (HYNMTAEFE) the chain is Extracellular. N740 is a glycosylation site (N-linked (GlcNAc...) asparagine). A helical membrane pass occupies residues 747 to 769 (EMLQVGNLVFTGIFTAEMTFKII). Residues 770–775 (ALDPYY) lie on the Cytoplasmic side of the membrane. Residues 776–796 (YFQQGWNIFDSIIVILSLMEL) traverse the membrane as a helical segment. The Extracellular portion of the chain corresponds to 797 to 806 (GLSRMGNLSV). N-linked (GlcNAc...) asparagine glycosylation occurs at N803. Residues 807 to 821 (LRSFRLLRVFKLAKS) form a helical membrane-spanning segment. The Cytoplasmic portion of the chain corresponds to 822 to 838 (WPTLNTLIKIIGNSVGA). A helical membrane pass occupies residues 839-860 (LGNLTLVLAIIVFIFAVVGMQL). The Extracellular segment spans residues 861–886 (FGKNYSELRHRISDSGLLPRWHMMDF). The N-linked (GlcNAc...) asparagine glycan is linked to N864. Positions 887-905 (FHAFLIIFRILCGEWIETM) form an intramembrane region, pore-forming. Over 906–914 (WDCMEVSGQ) the chain is Extracellular. The cysteines at positions 908 and 917 are disulfide-linked. Residues 915 to 943 (SLCLLVFLLVMVIGNLVVLNLFLALLLSS) traverse the membrane as a helical segment. Topologically, residues 944-1205 (FSADNLTAPD…LRKTCYRIVE (262 aa)) are cytoplasmic. The disordered stretch occupies residues 1000 to 1144 (HSQLPSCIAA…EDSYSEGSTA (145 aa)). Over residues 1017-1036 (EVEKAPPARKETRFEEDKRP) the composition is skewed to basic and acidic residues. Over residues 1056-1075 (SDTDDQEEDEENSLGTEEEE) the composition is skewed to acidic residues. Over residues 1098-1115 (SQVSETTSSEAEASTSQA) the composition is skewed to low complexity. Residues 1189–1503 (PGKVWWRLRK…KKYYNAMKKL (315 aa)) form an III repeat. The chain crosses the membrane as a helical span at residues 1206-1227 (HSWFETFIIFMILLSSGALAFE). The Extracellular portion of the chain corresponds to 1228 to 1238 (DIYLEERKTIK). A helical transmembrane segment spans residues 1239–1261 (VLLEYADKMFTYVFVLEMLLKWV). Residues 1262 to 1270 (AYGFKKYFT) lie on the Cytoplasmic side of the membrane. The chain crosses the membrane as a helical span at residues 1271–1293 (NAWCWLDFLIVDVSLVSLVANTL). Topologically, residues 1294 to 1299 (GFAEMG) are extracellular. Residues 1300 to 1319 (PIKSLRTLRALRPLRALSRF) form a helical membrane-spanning segment. Residues 1320-1332 (EGMRVVVNALVGA) are Cytoplasmic-facing. Residues 1333-1357 (IPSIMNVLLVCLIFWLIFSIMGVNL) traverse the membrane as a helical segment. Topologically, residues 1358-1402 (FAGKFGRCINQTEGDLPLNYTIVNNKSECESFNVTGELYWTKVKV) are extracellular. N1367, N1376, N1382, and N1390 each carry an N-linked (GlcNAc...) asparagine glycan. The pore-forming intramembrane region spans 1403-1424 (NFDNVGAGYLALLQVATFKGWM). Residues 1425 to 1447 (DIMYAAVDSRGYEEQPQWEDNLY) are Extracellular-facing. A helical membrane pass occupies residues 1448-1472 (MYIYFVVFIIFGSFFTLNLFIGVII). Residues 1473 to 1530 (DNFNQQKKKLGGQDIFMTEEQKKYYNAMKKLGSKKPQKPIPRPLNKYQGFIFDIVTKQ) are Cytoplasmic-facing. S1505 carries the post-translational modification Phosphoserine; by PKC. One copy of the IV repeat lies at 1512–1809 (IPRPLNKYQG…WEKFDPEATQ (298 aa)). The helical transmembrane segment at 1531-1549 (AFDVTIMFLICLNMVTMMV) threads the bilayer. Topologically, residues 1550–1560 (ETDDQSPEKVN) are extracellular. A helical membrane pass occupies residues 1561–1582 (ILAKINLLFVAIFTGECIVKMA). The Cytoplasmic portion of the chain corresponds to 1583–1591 (ALRHYYFTN). Residues 1592–1614 (SWNIFDFVVVILSIVGTVLSDII) traverse the membrane as a helical segment. At 1615–1621 (QKYFFSP) the chain is on the extracellular side. The chain crosses the membrane as a helical span at residues 1622–1642 (TLFRVIRLARIGRILRLIRGA). Residues 1643–1652 (KGIRTLLFAL) lie on the Cytoplasmic side of the membrane. A helical membrane pass occupies residues 1653 to 1681 (MMSLPALFNIGLLLFLVMFIYSIFGMANF). The Extracellular portion of the chain corresponds to 1682 to 1699 (AYVKWEAGIDDMFNFQTF). The segment at residues 1700 to 1716 (ANSMLCLFQITTSAGWD) is an intramembrane region (pore-forming). At 1717–1747 (GLLSPILNTGPPYCDPNLPNSNGSRGNCGSP) the chain is on the extracellular side. A helical membrane pass occupies residues 1748-1773 (AVGILFFTTYIIISFLIVVNMYIAII). The Cytoplasmic segment spans residues 1774 to 2019 (LENFSVATEE…SPDRDRESIV (246 aa)). Positions 1841 to 1903 (DLPMVSGDRI…ITTTLRRKHE (63 aa)) are interaction with FGF13. The 30-residue stretch at 1903 to 1932 (EEVSATVIQRAFRRHLLQRSVKHASFLFRQ) folds into the IQ domain. Over residues 1963–1982 (SGPLSSSSISSTSFPPSYDS) the composition is skewed to low complexity. Positions 1963-2019 (SGPLSSSSISSTSFPPSYDSVTRATSDNLPVRASDYSRSEDLADFPPSPDRDRESIV) are disordered. Residues 1977 to 1980 (PPSY) form an interaction with NEDD4, NEDD4L and WWP2 region.

It belongs to the sodium channel (TC 1.A.1.10) family. Nav1.5/SCN5A subfamily. In terms of assembly, cannot form the same regulatory interactions with beta subunits as other Navs do. Interacts with the PDZ domain of the syntrophin SNTA1, SNTB1 and SNTB2. Interacts with NEDD4, NEDD4L, WWP2 and GPD1L. Interacts with CALM. Interacts with FGF13; the interaction is direct and may regulate SNC5A density at membranes and function. Interacts with FGF12 and FGF14. Interacts with ANK3. Interacts with PKP2 (via N-terminus). Interacts with TMEM233. Interacts with XIRP2; the interaction is required for normal action potential configuration in the heart. Phosphorylation at Ser-1505 by PKC in a highly conserved cytoplasmic loop slows inactivation of the sodium channel and reduces peak sodium currents. Regulated through phosphorylation by CaMK2D. In terms of processing, ubiquitinated by NEDD4L; which promotes its endocytosis. Does not seem to be ubiquitinated by NEDD4 or WWP2. Post-translationally, lacks the cysteine which covalently binds the conotoxin GVIIJ. This cysteine (position 868) is speculated in other sodium channel subunits alpha to be implied in covalent binding with the sodium channel subunit beta-2 or beta-4. N-glycosylated at Asn-318, probably hinders potential interaction with regulatory subunits. In terms of tissue distribution, expressed in the myocardium (at protein level).

It is found in the cell membrane. The protein resides in the cytoplasm. Its subcellular location is the perinuclear region. It localises to the sarcolemma. The protein localises to the T-tubule. It is found in the cell junction. The enzyme catalyses Na(+)(in) = Na(+)(out). Its activity is regulated as follows. Channel inactivation is regulated by intracellular calcium levels. It is a tetrodotoxin-resistant voltage-gated Na(+) channel (Nav). In terms of biological role, pore-forming subunit of Nav1.5, a voltage-gated sodium (Nav) channel that directly mediates the depolarizing phase of action potentials in excitable membranes. Navs, also called VGSCs (voltage-gated sodium channels) or VDSCs (voltage-dependent sodium channels), operate by switching between closed and open conformations depending on the voltage difference across the membrane. In the open conformation they allow Na(+) ions to selectively pass through the pore, along their electrochemical gradient. The influx of Na(+) ions provokes membrane depolarization, initiating the propagation of electrical signals throughout cells and tissues. Nav1.5 is the predominant sodium channel expressed in myocardial cells and it is responsible for the initial upstroke of the action potential in cardiac myocytes, thereby initiating the heartbeat. Required for normal electrical conduction including formation of the infranodal ventricular conduction system and normal action potential configuration, as a result of its interaction with XIRP2. This Mus musculus (Mouse) protein is Sodium channel protein type 5 subunit alpha.